The sequence spans 1037 residues: Probable inorganic carbon transporter subunit DabA 1 (1037 aa).

The Zn(2+) site is built by cysteine 460, aspartate 462, histidine 719, and cysteine 734.

This sequence belongs to the inorganic carbon transporter (TC 9.A.2) DabA family. In terms of assembly, forms a complex with DabB. Zn(2+) is required as a cofactor.

It localises to the cell inner membrane. Functionally, part of an energy-coupled inorganic carbon pump. This is Probable inorganic carbon transporter subunit DabA 1 from Nitrobacter winogradskyi (strain ATCC 25391 / DSM 10237 / CIP 104748 / NCIMB 11846 / Nb-255).